The sequence spans 500 residues: Glycerol kinase (500 aa).

Thr-13 contacts ADP. The ATP site is built by Thr-13, Thr-14, and Ser-15. Position 13 (Thr-13) interacts with sn-glycerol 3-phosphate. ADP is bound at residue Arg-17. The sn-glycerol 3-phosphate site is built by Arg-83, Glu-84, Tyr-135, and Asp-244. The glycerol site is built by Arg-83, Glu-84, Tyr-135, Asp-244, and Gln-245. Residues Thr-266 and Gly-309 each contribute to the ADP site. ATP is bound by residues Thr-266, Gly-309, Gln-313, and Gly-410. Residues Gly-410 and Asn-414 each coordinate ADP.

It belongs to the FGGY kinase family.

It catalyses the reaction glycerol + ATP = sn-glycerol 3-phosphate + ADP + H(+). The protein operates within polyol metabolism; glycerol degradation via glycerol kinase pathway; sn-glycerol 3-phosphate from glycerol: step 1/1. Inhibited by fructose 1,6-bisphosphate (FBP). In terms of biological role, key enzyme in the regulation of glycerol uptake and metabolism. Catalyzes the phosphorylation of glycerol to yield sn-glycerol 3-phosphate. The polypeptide is Glycerol kinase (Burkholderia multivorans (strain ATCC 17616 / 249)).